Here is a 79-residue protein sequence, read N- to C-terminus: Cell division protein ZapB (79 aa).

A coiled-coil region spans residues 3–79 (LEVFEKLEAK…QALLGRMEEV (77 aa)). Lysine 8 carries the N6-acetyllysine modification. The interval 34–65 (NNSLSQEVQNAQHQREELERENNHLKEQQNGW) is disordered. A compositionally biased stretch (polar residues) spans 35–45 (NSLSQEVQNAQ). Basic and acidic residues predominate over residues 46–60 (HQREELERENNHLKE).

Belongs to the ZapB family. As to quaternary structure, homodimer. The ends of the coiled-coil dimer bind to each other, forming polymers. Interacts with FtsZ.

The protein resides in the cytoplasm. Functionally, non-essential, abundant cell division factor that is required for proper Z-ring formation. It is recruited early to the divisome by direct interaction with FtsZ, stimulating Z-ring assembly and thereby promoting cell division earlier in the cell cycle. Its recruitment to the Z-ring requires functional FtsA or ZipA. The polypeptide is Cell division protein ZapB (Shigella boydii serotype 18 (strain CDC 3083-94 / BS512)).